The primary structure comprises 632 residues: Phosphomethylpyrimidine synthase (632 aa).

The span at 1–23 shows a compositional bias: polar residues; that stretch reads MNIRSNPQQTVPAVTTGPLSSSR. The disordered stretch occupies residues 1 to 26; sequence MNIRSNPQQTVPAVTTGPLSSSRKIF. Substrate-binding positions include Asn-221, Met-250, Tyr-279, His-315, 335 to 337, 376 to 379, and Glu-415; these read SRG and DGLR. A Zn(2+)-binding site is contributed by His-419. Substrate is bound at residue Tyr-442. Residue His-483 coordinates Zn(2+). [4Fe-4S] cluster-binding residues include Cys-563, Cys-566, and Cys-571.

It belongs to the ThiC family. Homodimer. [4Fe-4S] cluster is required as a cofactor.

The enzyme catalyses 5-amino-1-(5-phospho-beta-D-ribosyl)imidazole + S-adenosyl-L-methionine = 4-amino-2-methyl-5-(phosphooxymethyl)pyrimidine + CO + 5'-deoxyadenosine + formate + L-methionine + 3 H(+). It functions in the pathway cofactor biosynthesis; thiamine diphosphate biosynthesis. Catalyzes the synthesis of the hydroxymethylpyrimidine phosphate (HMP-P) moiety of thiamine from aminoimidazole ribotide (AIR) in a radical S-adenosyl-L-methionine (SAM)-dependent reaction. This chain is Phosphomethylpyrimidine synthase, found in Bradyrhizobium diazoefficiens (strain JCM 10833 / BCRC 13528 / IAM 13628 / NBRC 14792 / USDA 110).